The sequence spans 156 residues: Small ribosomal subunit protein uS7 (156 aa).

This sequence belongs to the universal ribosomal protein uS7 family. As to quaternary structure, part of the 30S ribosomal subunit. Contacts proteins S9 and S11.

In terms of biological role, one of the primary rRNA binding proteins, it binds directly to 16S rRNA where it nucleates assembly of the head domain of the 30S subunit. Is located at the subunit interface close to the decoding center, probably blocks exit of the E-site tRNA. In Wigglesworthia glossinidia brevipalpis, this protein is Small ribosomal subunit protein uS7.